A 245-amino-acid polypeptide reads, in one-letter code: Dehydrogenase/reductase SDR family member 6 (245 aa).

NAD(+) contacts are provided by residues 16–18, D37, and D58; that span reads QGI. Residue R144 coordinates substrate. Y147 (proton acceptor) is an active-site residue. Residues K151 and 180 to 184 each bind NAD(+); that span reads VDTPS. Residues R188 and R205 each contribute to the substrate site.

The protein belongs to the short-chain dehydrogenases/reductases (SDR) family. Homotetramer.

It localises to the cytoplasm. It carries out the reaction cis-4-hydroxy-L-proline + NAD(+) = 4-oxo-L-proline + NADH + H(+). The catalysed reaction is (R)-3-hydroxybutanoate + NAD(+) = acetoacetate + NADH + H(+). Its pathway is amino-acid metabolism. The protein operates within siderophore biosynthesis. NAD(H)-dependent dehydrogenase/reductase with a preference for cyclic substrates. Catalyzes stereoselective conversion of 4-oxo-L-proline to cis-4-hydroxy-L-proline, likely a detoxification mechanism for ketoprolines. Mediates the formation of 2,5-dihydroxybenzoate (2,5-DHBA), a siderophore that chelates free cytoplasmic iron, thereby regulating iron transport and homeostasis while protecting cells against free radical-induced oxidative stress. The iron-siderophore complex is imported into mitochondria, providing an iron source for mitochondrial metabolic processes in particular heme synthesis. May act as a 3-hydroxybutyrate dehydrogenase. The protein is Dehydrogenase/reductase SDR family member 6 (bdh2) of Aquarana catesbeiana (American bullfrog).